A 305-amino-acid polypeptide reads, in one-letter code: tRNA pseudouridine synthase B (305 aa).

Catalysis depends on D48, which acts as the Nucleophile.

Belongs to the pseudouridine synthase TruB family. Type 1 subfamily.

It catalyses the reaction uridine(55) in tRNA = pseudouridine(55) in tRNA. In terms of biological role, responsible for synthesis of pseudouridine from uracil-55 in the psi GC loop of transfer RNAs. The polypeptide is tRNA pseudouridine synthase B (Mannheimia succiniciproducens (strain KCTC 0769BP / MBEL55E)).